The sequence spans 327 residues: Malate dehydrogenase (327 aa).

Residue 12–18 (GAAGQIG) participates in NAD(+) binding. Positions 93 and 99 each coordinate substrate. NAD(+) contacts are provided by residues asparagine 106, glutamine 113, and 130-132 (VGN). The substrate site is built by asparagine 132 and arginine 163. The Proton acceptor role is filled by histidine 188.

It belongs to the LDH/MDH superfamily. MDH type 2 family.

It carries out the reaction (S)-malate + NAD(+) = oxaloacetate + NADH + H(+). In terms of biological role, catalyzes the reversible oxidation of malate to oxaloacetate. The sequence is that of Malate dehydrogenase from Paraburkholderia phymatum (strain DSM 17167 / CIP 108236 / LMG 21445 / STM815) (Burkholderia phymatum).